A 434-amino-acid chain; its full sequence is Tryptophan dimethylallyltransferase nptA (434 aa).

Residues Ser91–Leu92 and Glu100 contribute to the L-tryptophan site. Substrate-binding residues include Arg115, Lys202, and Tyr204. L-tryptophan is bound at residue Tyr206. Positions 271, 273, 275, 358, 423, and 427 each coordinate substrate.

This sequence belongs to the tryptophan dimethylallyltransferase family. Homodimer.

It carries out the reaction L-tryptophan + dimethylallyl diphosphate = 4-(3-methylbut-2-enyl)-L-tryptophan + diphosphate. It participates in secondary metabolite biosynthesis. In terms of biological role, nonribosomal peptide synthase involved in the synthesis of nidulanin A and derived compounds. Nidulanin A is a tetracyclopeptide with the sequence L-Phe-L-Kyn-L-Val-D-Val and an isoprene unit N-linked to the amino group of L-kynurenine. The NRPS nlsA is responsible of the synthesis of the cyclopeptide and the prenyltransferase nptA adds the isoprene unit on the L-kynurenine residue of nidulanin A. Further modifications lead to additional oxygenated related compounds. The sequence is that of Tryptophan dimethylallyltransferase nptA from Emericella nidulans (strain FGSC A4 / ATCC 38163 / CBS 112.46 / NRRL 194 / M139) (Aspergillus nidulans).